Consider the following 276-residue polypeptide: Secretagogin (276 aa).

5 consecutive EF-hand domains span residues 12–47 (LDAACFWQIWQRFDKDEKGYIKETELDAFFDDLLAK), 105–140 (DNSVEFMQIWRKYDADSSGFISAAELSNFLRDLFLH), 149–184 (ELEEYTSTMEKIFDRNKDGRLDLNDLARILALQENF), 197–232 (ERKRDFEKIFAHYDVSKTGALEGPEVDGFVKDMMEL), and 240–276 (VDLDKFREILLRHCDVNKDGKIQKSELALCLGLKINP). Residues Asp-118, Asp-120, Ser-122, Glu-129, Asp-162, Asn-164, Asp-166, Arg-168, Asp-173, Asp-210, Ser-212, Thr-214, Glu-221, Asp-254, Asn-256, Asp-258, Lys-260, and Glu-265 each contribute to the Ca(2+) site.

As to expression, highly expressed in pancreas, in particular in pancreatic islets and pancreatic beta-cells. Detected in prostate, adrenal gland, small intestine, stomach and thyroid (at protein level).

Its subcellular location is the cytoplasm. It localises to the secreted. The protein localises to the cytoplasmic vesicle. It is found in the secretory vesicle membrane. This Rattus norvegicus (Rat) protein is Secretagogin (Scgn).